We begin with the raw amino-acid sequence, 459 residues long: Glutamyl-tRNA reductase (459 aa).

Residues Thr-47–Arg-50, Ser-140, Glu-145–Gln-147, and Gln-151 contribute to the substrate site. The Nucleophile role is filled by Cys-48. Residue Ala-220–Asn-225 participates in NADP(+) binding.

The protein belongs to the glutamyl-tRNA reductase family. As to quaternary structure, homodimer.

It catalyses the reaction (S)-4-amino-5-oxopentanoate + tRNA(Glu) + NADP(+) = L-glutamyl-tRNA(Glu) + NADPH + H(+). Its pathway is porphyrin-containing compound metabolism; protoporphyrin-IX biosynthesis; 5-aminolevulinate from L-glutamyl-tRNA(Glu): step 1/2. Functionally, catalyzes the NADPH-dependent reduction of glutamyl-tRNA(Glu) to glutamate 1-semialdehyde (GSA). The chain is Glutamyl-tRNA reductase from Psychrobacter arcticus (strain DSM 17307 / VKM B-2377 / 273-4).